The chain runs to 1343 residues: DNA-directed RNA polymerase subunit beta (1343 aa).

This sequence belongs to the RNA polymerase beta chain family. The RNAP catalytic core consists of 2 alpha, 1 beta, 1 beta' and 1 omega subunit. When a sigma factor is associated with the core the holoenzyme is formed, which can initiate transcription.

It catalyses the reaction RNA(n) + a ribonucleoside 5'-triphosphate = RNA(n+1) + diphosphate. Its function is as follows. DNA-dependent RNA polymerase catalyzes the transcription of DNA into RNA using the four ribonucleoside triphosphates as substrates. The protein is DNA-directed RNA polymerase subunit beta of Shewanella baltica (strain OS223).